The following is a 49-amino-acid chain: Large ribosomal subunit protein bL33B (49 aa).

Belongs to the bacterial ribosomal protein bL33 family.

The sequence is that of Large ribosomal subunit protein bL33B from Latilactobacillus sakei subsp. sakei (strain 23K) (Lactobacillus sakei subsp. sakei).